Reading from the N-terminus, the 270-residue chain is 3-phenylpropionate-dihydrodiol/cinnamic acid-dihydrodiol dehydrogenase (270 aa).

10–34 (FITGGGSGLGLALVERFIEEGAQVA) is an NAD(+) binding site. Serine 143 lines the substrate pocket. Catalysis depends on tyrosine 156, which acts as the Proton acceptor.

Belongs to the short-chain dehydrogenases/reductases (SDR) family.

The catalysed reaction is 3-(cis-5,6-dihydroxycyclohexa-1,3-dien-1-yl)propanoate + NAD(+) = 3-(2,3-dihydroxyphenyl)propanoate + NADH + H(+). It catalyses the reaction (2E)-3-(cis-5,6-dihydroxycyclohexa-1,3-dien-1-yl)prop-2-enoate + NAD(+) = (2E)-3-(2,3-dihydroxyphenyl)prop-2-enoate + NADH + H(+). The protein operates within aromatic compound metabolism; 3-phenylpropanoate degradation. Functionally, converts 3-phenylpropionate-dihydrodiol (PP-dihydrodiol) and cinnamic acid-dihydrodiol (CI-dihydrodiol) into 3-(2,3-dihydroxylphenyl)propanoic acid (DHPP) and 2,3-dihydroxicinnamic acid (DHCI), respectively. In Shigella sonnei (strain Ss046), this protein is 3-phenylpropionate-dihydrodiol/cinnamic acid-dihydrodiol dehydrogenase.